The sequence spans 144 residues: Signal recognition particle 19 kDa protein (144 aa).

Residues 117 to 144 (TRTQKTGGGDQSLQQGEGSKKGKGKKKK) form a disordered region.

This sequence belongs to the SRP19 family. Component of a signal recognition particle complex that consists of a 7SL RNA molecule of 300 nucleotides and six protein subunits: SRP72, SRP68, SRP54, SRP19, SRP14 and SRP9. Interacts with IPO5, IPO7, IPO8, KPNB1 and TNPO1. Interactions with IPO8 and TNPO1 may be involved in SRP19 import into the nucleus.

The protein resides in the cytoplasm. The protein localises to the nucleus. Its subcellular location is the nucleolus. It localises to the nucleoplasm. In terms of biological role, component of the signal recognition particle (SRP) complex, a ribonucleoprotein complex that mediates the cotranslational targeting of secretory and membrane proteins to the endoplasmic reticulum (ER). Binds directly to 7SL RNA. Mediates binding of SRP54 to the SRP complex. The protein is Signal recognition particle 19 kDa protein of Canis lupus familiaris (Dog).